A 165-amino-acid polypeptide reads, in one-letter code: Zinc finger C2H2 protein ECU11_0990 (165 aa).

Basic and acidic residues-rich tracts occupy residues 1 to 10 (MEAESPKERV) and 19 to 32 (DPER…DTSS). Residues 1 to 38 (MEAESPKERVQGVSGESWDPERGVKEREDTSSKKGKGV) form a disordered region. 2 C2H2-type zinc fingers span residues 103-125 (FGCE…KAQH) and 136-158 (LFCP…SRYH).

This Encephalitozoon cuniculi (strain GB-M1) (Microsporidian parasite) protein is Zinc finger C2H2 protein ECU11_0990.